An 87-amino-acid polypeptide reads, in one-letter code: Small ribosomal subunit protein bS16 (87 aa).

Belongs to the bacterial ribosomal protein bS16 family.

The protein is Small ribosomal subunit protein bS16 of Ehrlichia ruminantium (strain Gardel).